A 116-amino-acid chain; its full sequence is UPF0499 protein ATEG_06693 (116 aa).

Positions 1–18 (MKLTGLLSLALLTTLALA) are cleaved as a signal peptide. Cystine bridges form between cysteine 32–cysteine 46, cysteine 36–cysteine 49, and cysteine 42–cysteine 54.

The protein belongs to the UPF0499 family.

It is found in the secreted. The protein is UPF0499 protein ATEG_06693 of Aspergillus terreus (strain NIH 2624 / FGSC A1156).